Here is a 225-residue protein sequence, read N- to C-terminus: MKIVVPIMPTSLEEAQALELSRFEGADIIEWRADFLDKHSILTVAPAIFEKFAGFEIVFTIRTTREGGKIELTDGEYVTLIKDVAAIYSPDYIDFEYFTRKEVFDQMLEFSNLVLSYHNFEETPENLMELLSEMTNLTPRVVKVAVMPKNEQDVLDLMNFTRGFKAFNPEQEFVTMSMGKLGRLSRLAGDLVGSSWTFASLDNTSAPGQVALADMCRIREVLDAD.

Residues 30-32 (EWR) and arginine 62 each bind 3-dehydroquinate. The active-site Proton donor/acceptor is histidine 118. The Schiff-base intermediate with substrate role is filled by lysine 143. The 3-dehydroquinate site is built by arginine 186, serine 205, and glutamine 209.

This sequence belongs to the type-I 3-dehydroquinase family. In terms of assembly, homodimer.

It carries out the reaction 3-dehydroquinate = 3-dehydroshikimate + H2O. It functions in the pathway metabolic intermediate biosynthesis; chorismate biosynthesis; chorismate from D-erythrose 4-phosphate and phosphoenolpyruvate: step 3/7. Its function is as follows. Involved in the third step of the chorismate pathway, which leads to the biosynthesis of aromatic amino acids. Catalyzes the cis-dehydration of 3-dehydroquinate (DHQ) and introduces the first double bond of the aromatic ring to yield 3-dehydroshikimate. The protein is 3-dehydroquinate dehydratase of Streptococcus thermophilus (strain ATCC BAA-491 / LMD-9).